The sequence spans 204 residues: MPSIISDPQAYDIMLRLLQFSCWSLSYINTVRTTLSDQLPSVSFMSICCDVAWEFVYAFVYPIASSHWAGGIRIWFAMHCVMLFIVAKYAPNDWDHVPLMKRFARLAYVAITIGFMAGHLALASEIGPALGFFWSGALCQITASLGSLCLLVCRGSTRGASIKTCPLCWFYIAITLTLDAIYPVFFFYFRAIEHPKKDSERKVE.

5 helical membrane passes run 44–64 (FMSICCDVAWEFVYAFVYPIA), 67–87 (HWAGGIRIWFAMHCVMLFIVA), 103–122 (FARLAYVAITIGFMAGHLAL), 132–154 (FFWSGALCQITASLGSLCLLVCR), and 169–189 (WFYIAITLTLDAIYPVFFFYF).

Belongs to the paxB family.

It localises to the membrane. The protein operates within secondary metabolite biosynthesis; terpenoid biosynthesis. In terms of biological role, terpene cyclase; part of the gene cluster that mediates the biosynthesis of terretonin, a fungal meroterpenoid that acts as a mycotoxin. The first step of the pathway is the synthesis of 3,5-dimethylorsellinic acid (DMOA) by the polyketide synthase trt4. DMOA is then prenylated into farnesyl-DMOA by the polyprenyl transferase trt2. Methylation by the methyltransferase trt5 then leads to farnesyl-DMOA methyl ester which is further subject to epoxidation by the FAD-dependent monooxygenase trt8 to yield epoxyfarnesyl-DMOA methyl ester. Cyclization of epoxyfarnesyl-DMOA methyl ester by the terpene cyclase trt1 leads to a tetracycle intermediate which is in turn converted to preterretonin. Dehydrogenase trt9 comes next to transform preterretonin to preterrenoid. The FAD-dependent monooxygenase trt3 is then required for the C-hydroxylation at C16 of preterrenoid to yield terrenoid. The cytochrome P450 trt6 catalyzes three successive oxidations to transform terrenoid into an unstable intermediate, which then undergoes the D-ring expansion and unusual rearrangement of the methoxy group to afford the core skeleton of terretonin. Trt14 catalyzes the D-ring expansion of terretonin involving intramolecular methoxy rearrangement as well as the hydrolysis of the expanded D-ring and the methyl ester moiety. Finally, the nonheme iron-dependent dioxygenase trt7 accomplishes the last two oxidation reactions steps to complete the biosynthesis of terretonin. Terretonin C is produced via spontaneous decarboxylation of the terretonin precursor. Another shunt product of the terretonin biosynthesis is dihydrofarnesyl-DMOA, derived from epoxyfarnesyl-DMOA through hydrolysis of the epoxide. This Aspergillus terreus (strain NIH 2624 / FGSC A1156) protein is Terpene cyclase trt1.